Here is a 228-residue protein sequence, read N- to C-terminus: UPF0758 protein CLB_3028 (228 aa).

Residues 106 to 228 form the MPN domain; that stretch reads KISTPLDVSN…YVSMKEKGTI (123 aa). His-177, His-179, and Asp-190 together coordinate Zn(2+). The JAMM motif motif lies at 177–190; the sequence is HNHPSGDPTPSKED.

This sequence belongs to the UPF0758 family.

The chain is UPF0758 protein CLB_3028 from Clostridium botulinum (strain ATCC 19397 / Type A).